Reading from the N-terminus, the 397-residue chain is Acetate kinase 2 (397 aa).

Asn-10 provides a ligand contact to Mg(2+). Lys-17 is a binding site for ATP. Arg-90 lines the substrate pocket. Asp-147 acts as the Proton donor/acceptor in catalysis. ATP contacts are provided by residues 207–211 (HLGNG), 281–283 (DAR), and 329–333 (GIGEN). Glu-385 contributes to the Mg(2+) binding site.

It belongs to the acetokinase family. In terms of assembly, homodimer. Mg(2+) serves as cofactor. The cofactor is Mn(2+).

It localises to the cytoplasm. It carries out the reaction acetate + ATP = acetyl phosphate + ADP. The protein operates within metabolic intermediate biosynthesis; acetyl-CoA biosynthesis; acetyl-CoA from acetate: step 1/2. Catalyzes the formation of acetyl phosphate from acetate and ATP. Can also catalyze the reverse reaction. The protein is Acetate kinase 2 of Aliivibrio fischeri (strain ATCC 700601 / ES114) (Vibrio fischeri).